Here is a 190-residue protein sequence, read N- to C-terminus: Elongation factor P (190 aa).

Belongs to the elongation factor P family.

It localises to the cytoplasm. It participates in protein biosynthesis; polypeptide chain elongation. Involved in peptide bond synthesis. Stimulates efficient translation and peptide-bond synthesis on native or reconstituted 70S ribosomes in vitro. Probably functions indirectly by altering the affinity of the ribosome for aminoacyl-tRNA, thus increasing their reactivity as acceptors for peptidyl transferase. The sequence is that of Elongation factor P from Amoebophilus asiaticus (strain 5a2).